Reading from the N-terminus, the 516-residue chain is Radial spoke head protein 3 homolog A (516 aa).

Disordered regions lie at residues 1 to 45 (MAAT…GNPA), 120 to 139 (STLNQASAMTDPNPRTAEAS), and 190 to 233 (PTGQ…PVEG). Residues 12–25 (AKKRPLHQRARRPA) are compositionally biased toward basic residues. The span at 120-129 (STLNQASAMT) shows a compositional bias: polar residues. Residues 208-217 (QARRRALARK) are compositionally biased toward basic residues. Over residues 218–233 (RAQEQLKPRTPEPVEG) the composition is skewed to basic and acidic residues. At threonine 270 the chain carries Phosphothreonine; by MAPK1. The stretch at 333-369 (YEEIRNVELAEVQRLEEQERRHREEKERRKKQQWEIV) forms a coiled coil. The disordered stretch occupies residues 459-516 (EAMPPGQKTNVINGPNTVTDPSVTTLHTQKPVLDRVSSQPAPSQERKPVEEGGHLMAE). The segment covering 465-486 (QKTNVINGPNTVTDPSVTTLHT) has biased composition (polar residues). Positions 502–516 (QERKPVEEGGHLMAE) are enriched in basic and acidic residues.

Belongs to the flagellar radial spoke RSP3 family. As to quaternary structure, may be a component of axonemal radial spokes. Interacts with IQUB. Interacts with phosphorylated MAPK1. Interacts with MEK1. Interacts with PKA regulatory subunits PRKAR1A and PRKAR1B. Interacts with RSPH1. Interacts with RSPH4A. Interacts with RSPH6A. Interacts with RSPH9. Interacts with CFAP61. Interacts with LRRC23.

The protein resides in the cytoplasm. It localises to the cytoskeleton. Its subcellular location is the cilium axoneme. The protein localises to the flagellum axoneme. In terms of biological role, may function as part of axonemal radial spoke complexes that play an important part in the motility of sperm and cilia. Functions as a protein kinase A-anchoring protein that scaffolds the cAMP-dependent protein kinase holoenzyme. May serve as a point of convergence for MAPK and PKA signaling in cilia. This is Radial spoke head protein 3 homolog A (Rsph3a) from Mus musculus (Mouse).